Here is a 139-residue protein sequence, read N- to C-terminus: uncharacterized protein (139 aa).

The segment at methionine 1–glycine 26 is disordered. Residues lysine 17 to glycine 26 are compositionally biased toward basic and acidic residues.

This is an uncharacterized protein from Ictalurid herpesvirus 1 (strain Auburn) (IcHV-1).